Consider the following 429-residue polypeptide: 3-phosphoshikimate 1-carboxyvinyltransferase (429 aa).

3-phosphoshikimate is bound by residues lysine 20, serine 21, and arginine 25. Residue lysine 20 participates in phosphoenolpyruvate binding. Phosphoenolpyruvate contacts are provided by glycine 89 and arginine 118. 6 residues coordinate 3-phosphoshikimate: serine 164, serine 165, glutamine 166, serine 192, aspartate 311, and lysine 338. Glutamine 166 serves as a coordination point for phosphoenolpyruvate. Aspartate 311 acts as the Proton acceptor in catalysis. The phosphoenolpyruvate site is built by arginine 342 and arginine 384.

It belongs to the EPSP synthase family. As to quaternary structure, monomer.

Its subcellular location is the cytoplasm. The catalysed reaction is 3-phosphoshikimate + phosphoenolpyruvate = 5-O-(1-carboxyvinyl)-3-phosphoshikimate + phosphate. Its pathway is metabolic intermediate biosynthesis; chorismate biosynthesis. Its function is as follows. Catalyzes the transfer of the enolpyruvyl moiety of phosphoenolpyruvate (PEP) to the 5-hydroxyl of shikimate-3-phosphate (S3P) to produce enolpyruvyl shikimate-3-phosphate and inorganic phosphate. The chain is 3-phosphoshikimate 1-carboxyvinyltransferase from Methanococcus maripaludis (strain DSM 14266 / JCM 13030 / NBRC 101832 / S2 / LL).